Here is a 182-residue protein sequence, read N- to C-terminus: Bifunctional protein PyrR (182 aa).

The PRPP-binding signature appears at 99–111; the sequence is VVLVDDVLFTGRT.

This sequence belongs to the purine/pyrimidine phosphoribosyltransferase family. PyrR subfamily.

It carries out the reaction UMP + diphosphate = 5-phospho-alpha-D-ribose 1-diphosphate + uracil. Its function is as follows. Regulates the transcription of the pyrimidine nucleotide (pyr) operon in response to exogenous pyrimidines. Functionally, also displays a weak uracil phosphoribosyltransferase activity which is not physiologically significant. The protein is Bifunctional protein PyrR of Chloroflexus aurantiacus (strain ATCC 29366 / DSM 635 / J-10-fl).